Consider the following 252-residue polypeptide: Uracil-DNA glycosylase (252 aa).

Asp-78 acts as the Proton acceptor in catalysis.

The protein belongs to the uracil-DNA glycosylase (UDG) superfamily. UNG family.

The protein localises to the cytoplasm. It carries out the reaction Hydrolyzes single-stranded DNA or mismatched double-stranded DNA and polynucleotides, releasing free uracil.. Its function is as follows. Excises uracil residues from the DNA which can arise as a result of misincorporation of dUMP residues by DNA polymerase or due to deamination of cytosine. The protein is Uracil-DNA glycosylase of Bordetella avium (strain 197N).